The chain runs to 364 residues: MSLQSIKYSRGSLEILDQLLLPGQSKYEVVRGVEDGWKVINKMQVRGAPAIAIVGCLSLAVEINPEDFETKKSLRQEVEGKLNYLVSARPTAVNMKIAADELITLANDLYKDEAIDVNGMKQRFLDATEAMLKKDIADNRAIGANGAKAILQRVAEKGGAPAGSTGSVRVLTHCNTGSLATAGYGTALGVVRQLAELGKLEHVYCTETRPYNQGARLTAYELVHEKFPATLVLDSMVAALLRAKNVAAVVVGADRVASNGDTANKIGTYQIAVVAKHHDVPFYVAAPLTSIDLAIPGGDHIIIEERPDREMTHVGEHRIAAPGINCWNPAFDVTPASLITGIITERGVFKPAELKEAITKLLES.

D254 serves as the catalytic Proton donor.

Belongs to the eIF-2B alpha/beta/delta subunits family. MtnA subfamily.

It is found in the cytoplasm. The protein resides in the nucleus. The enzyme catalyses 5-(methylsulfanyl)-alpha-D-ribose 1-phosphate = 5-(methylsulfanyl)-D-ribulose 1-phosphate. The protein operates within amino-acid biosynthesis; L-methionine biosynthesis via salvage pathway; L-methionine from S-methyl-5-thio-alpha-D-ribose 1-phosphate: step 1/6. Its function is as follows. Catalyzes the interconversion of methylthioribose-1-phosphate (MTR-1-P) into methylthioribulose-1-phosphate (MTRu-1-P). The protein is Methylthioribose-1-phosphate isomerase of Drosophila erecta (Fruit fly).